A 292-amino-acid chain; its full sequence is MEMO1 family protein PF1638 (292 aa).

Belongs to the MEMO1 family.

The polypeptide is MEMO1 family protein PF1638 (Pyrococcus furiosus (strain ATCC 43587 / DSM 3638 / JCM 8422 / Vc1)).